The sequence spans 179 residues: Chymotrypsin inhibitor ECI (179 aa).

Gln-1 is subject to Pyrrolidone carboxylic acid. Cystine bridges form between Cys-40-Cys-84 and Cys-134-Cys-143.

The protein belongs to the protease inhibitor I3 (leguminous Kunitz-type inhibitor) family.

Functionally, inhibition of chymotrypsin. This chain is Chymotrypsin inhibitor ECI, found in Erythrina variegata (Indian coral tree).